The sequence spans 129 residues: Glutaredoxin-like protein ECU08_1380 (129 aa).

In terms of domain architecture, Glutaredoxin spans 26 to 126; that stretch reads EADYGEMVRR…PLLTQNREPV (101 aa).

The protein belongs to the glutaredoxin family.

It localises to the cytoplasm. In terms of biological role, has a glutathione-disulfide oxidoreductase activity in the presence of NADPH and glutathione reductase. Reduces low molecular weight disulfides and proteins. In Encephalitozoon cuniculi (strain GB-M1) (Microsporidian parasite), this protein is Glutaredoxin-like protein ECU08_1380.